The sequence spans 358 residues: Core-capsid bridging protein (358 aa).

The tract at residues 296 to 331 (PSITPTPGYRGTTFKPSRTRSTRRRRSVRRRSRRTA) is disordered. Positions 312–329 (SRTRSTRRRRSVRRRSRR) are enriched in basic residues.

It belongs to the adenoviridae core-capsid bridging protein family. As to quaternary structure, monomer. Homodimer. Exists in equilibrium between monomers and dimers in solution. Interacts with the histone-like nucleoprotein; this interactions bridge the virus core to the capsid. Interacts with core protein X; this interactions bridge the virus core to the capsid. Interacts with the endosome lysis protein VI; this interactions bridge the virus core to the capsid. Interacts with the peripentonal hexons. Interacts with host NPM1; this interaction might play a role in virus assembly.

The protein localises to the virion. It is found in the host nucleus. The protein resides in the host nucleolus. Associates loosely with the viral DNA to form an outer shell around the nucleoprotein-DNA complex and links it with the capsid by binding the endosome lysis protein. Dissociates from the viral genome during entry. Might be involved in nuclear capsid assembly of the viral particles through its association with NPM1/nucleophosmin. This chain is Core-capsid bridging protein, found in Human adenovirus F serotype 40 (HAdV-40).